We begin with the raw amino-acid sequence, 274 residues long: Small ribosomal subunit protein uS2 (274 aa).

Belongs to the universal ribosomal protein uS2 family.

The polypeptide is Small ribosomal subunit protein uS2 (Syntrophobacter fumaroxidans (strain DSM 10017 / MPOB)).